The following is a 321-amino-acid chain: Cytochrome c biogenesis protein CcsA (321 aa).

7 helical membrane-spanning segments follow: residues 9-29, 44-64, 68-88, 143-163, 225-245, 259-273, and 288-308; these read ILTH…LITL, GMIA…VSSG, LSNL…LHTI, MLLS…LLII, VISL…VWAN, TWAF…IYLH, and VASI…LLGI.

The protein belongs to the CcmF/CycK/Ccl1/NrfE/CcsA family. As to quaternary structure, may interact with Ccs1.

It localises to the plastid. The protein localises to the chloroplast thylakoid membrane. In terms of biological role, required during biogenesis of c-type cytochromes (cytochrome c6 and cytochrome f) at the step of heme attachment. The chain is Cytochrome c biogenesis protein CcsA from Zea mays (Maize).